Consider the following 27-residue polypeptide: Delta-conotoxin TxVIB (27 aa).

3 disulfide bridges follow: cysteine 2–cysteine 17, cysteine 9–cysteine 21, and cysteine 16–cysteine 26.

Belongs to the conotoxin O1 superfamily. In terms of tissue distribution, expressed by the venom duct.

The protein localises to the secreted. Its function is as follows. Delta-conotoxins bind to site 6 of voltage-gated sodium channels (Nav) and inhibit the inactivation process. Induces membrane depolarization and spontaneous repetitive firing of neurons. This chain is Delta-conotoxin TxVIB, found in Conus textile (Cloth-of-gold cone).